The following is a 696-amino-acid chain: Probable glutamine--fructose-6-phosphate aminotransferase [isomerizing] (696 aa).

The active-site For GATase activity is the Cys-2. In terms of domain architecture, Glutamine amidotransferase type-2 spans 2 to 303; the sequence is CGIFGYINYL…DDDIAHVRDG (302 aa). 2 SIS domains span residues 375 to 514 and 547 to 686; these read YYDI…DSVS and AIEQ…VDQP.

The enzyme catalyses D-fructose 6-phosphate + L-glutamine = D-glucosamine 6-phosphate + L-glutamate. The protein operates within nucleotide-sugar biosynthesis; UDP-N-acetyl-alpha-D-glucosamine biosynthesis; alpha-D-glucosamine 6-phosphate from D-fructose 6-phosphate: step 1/1. Its function is as follows. Involved in amino sugar synthesis (formation of chitin, supplies the amino sugars of asparagine-linked oligosaccharides of glycoproteins). The chain is Probable glutamine--fructose-6-phosphate aminotransferase [isomerizing] from Schizosaccharomyces pombe (strain 972 / ATCC 24843) (Fission yeast).